The primary structure comprises 70 residues: Potassium channel toxin kappa-KTx 2.5 (70 aa).

The N-terminal stretch at 1 to 26 (MESSRKSYVLMLFLAFVIMNVCSVSG) is a signal peptide. Residues 27–42 (EPKDGEIAGFEMEEAR) constitute a propeptide that is removed on maturation. Cystine bridges form between C46/C64 and C50/C60.

This sequence belongs to the short scorpion toxin superfamily. Potassium channel inhibitor kappa-KTx family. Kappa-KTx 2 subfamily. Expressed by the venom gland.

It localises to the secreted. In terms of biological role, voltage-independently blocks potassium currents on hKv1.1/KCNA1 (IC(50)=217 uM), and hKv1.4/KCNA4 (IC(50)=71 uM) (expressed in CHO cells). The chain is Potassium channel toxin kappa-KTx 2.5 from Opisthacanthus cayaporum (South American scorpion).